The chain runs to 444 residues: U-box domain-containing protein 31 (444 aa).

Residues 59-133 form the U-box domain; that stretch reads EIPSVFICPI…YTWFSQKYVL (75 aa). ARM repeat units follow at residues 301-340 and 343-382; these read KQVRNLLVRIGAVPQLVDVLPCLDVECLESALFVLDSLCL and EGRIALKDSVNTIPHTVRLLMKVSEKCTNYAISILWSVCK.

It catalyses the reaction S-ubiquitinyl-[E2 ubiquitin-conjugating enzyme]-L-cysteine + [acceptor protein]-L-lysine = [E2 ubiquitin-conjugating enzyme]-L-cysteine + N(6)-ubiquitinyl-[acceptor protein]-L-lysine.. It participates in protein modification; protein ubiquitination. Functionally, functions as an E3 ubiquitin ligase. In Arabidopsis thaliana (Mouse-ear cress), this protein is U-box domain-containing protein 31 (PUB31).